We begin with the raw amino-acid sequence, 84 residues long: Cell division topological specificity factor (84 aa).

It belongs to the MinE family.

Its function is as follows. Prevents the cell division inhibition by proteins MinC and MinD at internal division sites while permitting inhibition at polar sites. This ensures cell division at the proper site by restricting the formation of a division septum at the midpoint of the long axis of the cell. This Pseudomonas fluorescens (strain Pf0-1) protein is Cell division topological specificity factor.